Consider the following 932-residue polypeptide: Serotype-specific antigen 1 (932 aa).

Positions 1–24 (MYKIKHSFNKTLIAISISSFLSIA) are cleaved as a signal peptide. Residues 25 to 407 (YATESIENPQ…WGLINLKKAV (383 aa)) form the Peptidase S8 domain. Residues D58, H116, and S351 each act as charge relay system in the active site. Residues 669 to 932 (HTPLQTTVWA…PIWLESKCWL (264 aa)) enclose the Autotransporter domain.

It belongs to the peptidase S8 family.

Its subcellular location is the cell outer membrane. The protein is Serotype-specific antigen 1 (ssa1) of Mannheimia haemolytica (Pasteurella haemolytica).